Consider the following 361-residue polypeptide: Alanine racemase (361 aa).

Lysine 34 functions as the Proton acceptor; specific for D-alanine in the catalytic mechanism. An N6-(pyridoxal phosphate)lysine modification is found at lysine 34. Residue arginine 129 participates in substrate binding. Tyrosine 254 (proton acceptor; specific for L-alanine) is an active-site residue. Methionine 302 provides a ligand contact to substrate.

The protein belongs to the alanine racemase family. It depends on pyridoxal 5'-phosphate as a cofactor.

The catalysed reaction is L-alanine = D-alanine. The enzyme catalyses L-serine = D-serine. It participates in amino-acid biosynthesis; D-alanine biosynthesis; D-alanine from L-alanine: step 1/1. Catalyzes the interconversion of L-alanine and D-alanine. Likely plays an important role in supplying D-alanine, which is an indispensable constituent in the biosynthesis of bacterial cell-wall peptidoglycan. To a lesser extent, is also able to racemize L-serine and D-serine. Does not act on other proteinogenic amino-acids. This Vibrio cholerae serotype O1 (strain ATCC 39315 / El Tor Inaba N16961) protein is Alanine racemase (alr1).